Reading from the N-terminus, the 510-residue chain is NAD(P)H-quinone oxidoreductase subunit 2, chloroplastic (510 aa).

12 consecutive transmembrane segments (helical) span residues Leu-24–Leu-44, Trp-59–Trp-79, Ile-99–Ile-119, Met-124–Cys-144, Leu-149–Tyr-169, Tyr-183–Gly-203, Ile-229–Phe-249, Trp-295–Ile-315, Met-323–Asp-343, Tyr-354–Leu-374, Ala-395–Phe-415, and Leu-418–Leu-438.

It belongs to the complex I subunit 2 family. As to quaternary structure, NDH is composed of at least 16 different subunits, 5 of which are encoded in the nucleus.

The protein resides in the plastid. The protein localises to the chloroplast thylakoid membrane. It catalyses the reaction a plastoquinone + NADH + (n+1) H(+)(in) = a plastoquinol + NAD(+) + n H(+)(out). The enzyme catalyses a plastoquinone + NADPH + (n+1) H(+)(in) = a plastoquinol + NADP(+) + n H(+)(out). Its function is as follows. NDH shuttles electrons from NAD(P)H:plastoquinone, via FMN and iron-sulfur (Fe-S) centers, to quinones in the photosynthetic chain and possibly in a chloroplast respiratory chain. The immediate electron acceptor for the enzyme in this species is believed to be plastoquinone. Couples the redox reaction to proton translocation, and thus conserves the redox energy in a proton gradient. The protein is NAD(P)H-quinone oxidoreductase subunit 2, chloroplastic of Ananas comosus (Pineapple).